The chain runs to 707 residues: Bone morphogenetic protein 1 (707 aa).

The tract at residues 57 to 90 (SGAATNISRPEKGRRTRKERRRSREKRASTSRPE) is disordered. Asn-62 carries N-linked (GlcNAc...) asparagine glycosylation. Basic residues predominate over residues 68-81 (KGRRTRKERRRSRE). One can recognise a Peptidase M12A domain in the interval 84–283 (ASTSRPERVW…AQARKLYKCP (200 aa)). N-linked (GlcNAc...) asparagine glycosylation is present at Asn-105. Disulfide bonds link Cys-126–Cys-282, Cys-146–Cys-168, Cys-148–Cys-149, and Cys-285–Cys-311. Position 176 (His-176) interacts with Zn(2+). Glu-177 is a catalytic residue. His-180 and His-186 together coordinate Zn(2+). CUB domains are found at residues 285-397 (CGET…YEAL) and 398-509 (CGGE…NYFK). 2 N-linked (GlcNAc...) asparagine glycosylation sites follow: Asn-295 and Asn-326. Cystine bridges form between Cys-338/Cys-360, Cys-398/Cys-424, Cys-451/Cys-473, Cys-514/Cys-526, Cys-522/Cys-535, Cys-537/Cys-550, Cys-554/Cys-580, and Cys-607/Cys-629. The region spanning 510 to 551 (EVDECSRPNNGGCEQRCVNTLGSYKCACDPGYELGQDKKSCE) is the EGF-like; calcium-binding domain. Residues 554 to 666 (CGGFLTKLNG…KGFQANFFSE (113 aa)) enclose the CUB 3 domain. Asn-562 carries N-linked (GlcNAc...) asparagine glycosylation. The segment at 682 to 707 (RGQQNQAPKRVRPRMRLRTVKKTRPP) is disordered. The span at 690–707 (KRVRPRMRLRTVKKTRPP) shows a compositional bias: basic residues.

Interacts with olfml3/ont1. Zn(2+) serves as cofactor. Proteolytically activated in the trans-Golgi network by furin-like/paired basic proprotein convertases, cleavage is not required for secretion.

The protein resides in the golgi apparatus. Its subcellular location is the trans-Golgi network. The protein localises to the secreted. It localises to the extracellular space. It is found in the extracellular matrix. Functionally, metalloprotease involved in pattern formation in gastrula and later differentiation of developing organs. Able to cleave chordin (chrd), suggesting that it may act in dorsoventral patterning during early development by regulating the chordin (chrd) activity. This chain is Bone morphogenetic protein 1 (bmp1), found in Xenopus laevis (African clawed frog).